Consider the following 381-residue polypeptide: ELMO domain-containing protein 3 (381 aa).

A compositionally biased stretch (basic and acidic residues) spans 1 to 17 (MNENFHSFHEKELRDGQ). A disordered region spans residues 1-31 (MNENFHSFHEKELRDGQVESVSAGSSPPCDK). The ELMO domain maps to 170-324 (MHGRVLQTIY…DLEMSAKKSP (155 aa)).

It is found in the cell projection. It localises to the stereocilium. The protein localises to the kinocilium. Its subcellular location is the cytoplasm. The protein resides in the cytoskeleton. Acts as a GTPase-activating protein (GAP) for ARL2 with low specific activity. The sequence is that of ELMO domain-containing protein 3 (ELMOD3) from Bos taurus (Bovine).